Here is a 260-residue protein sequence, read N- to C-terminus: Ribosomal RNA small subunit methyltransferase J (260 aa).

S-adenosyl-L-methionine contacts are provided by residues 108-109, 124-125, and aspartate 178; these read RD and ER.

Belongs to the methyltransferase superfamily. RsmJ family.

The protein localises to the cytoplasm. It catalyses the reaction guanosine(1516) in 16S rRNA + S-adenosyl-L-methionine = N(2)-methylguanosine(1516) in 16S rRNA + S-adenosyl-L-homocysteine + H(+). Its function is as follows. Specifically methylates the guanosine in position 1516 of 16S rRNA. The protein is Ribosomal RNA small subunit methyltransferase J of Ectopseudomonas mendocina (strain ymp) (Pseudomonas mendocina).